The chain runs to 108 residues: Cytochrome bo(3) ubiquinol oxidase subunit 4 (108 aa).

Topologically, residues 1-16 (MNKYKKIKNNFDKEKK) are cytoplasmic. Residues 17-37 (SYIVGFLFSLFLTIIPFFCTL) form a helical membrane-spanning segment. Topologically, residues 38–46 (NHLFSRKIN) are extracellular. A helical membrane pass occupies residues 47–67 (FFVILLCALSQIIIHFIYFLH). Topologically, residues 68–77 (LDFSKKNSWN) are cytoplasmic. The helical transmembrane segment at 78–98 (IISLLFILIIVFIIVFGSIWI) threads the bilayer. The Extracellular portion of the chain corresponds to 99–108 (MYNLNHHVIL).

Belongs to the cytochrome c oxidase bacterial subunit 4 family. As to quaternary structure, heterooctamer of two A chains, two B chains, two C chains and two D chains.

The protein resides in the cell membrane. Cytochrome bo(3) ubiquinol terminal oxidase is the component of the aerobic respiratory chain of E.coli that predominates when cells are grown at high aeration. Has proton pump activity across the membrane in addition to electron transfer, pumping 2 protons/electron. This chain is Cytochrome bo(3) ubiquinol oxidase subunit 4 (cyoD), found in Buchnera aphidicola subsp. Schizaphis graminum (strain Sg).